A 251-amino-acid chain; its full sequence is Ubiquinone/menaquinone biosynthesis C-methyltransferase UbiE (251 aa).

Residues threonine 74, aspartate 95, 123–124, and serine 140 each bind S-adenosyl-L-methionine; that span reads NA.

The protein belongs to the class I-like SAM-binding methyltransferase superfamily. MenG/UbiE family.

It catalyses the reaction a 2-demethylmenaquinol + S-adenosyl-L-methionine = a menaquinol + S-adenosyl-L-homocysteine + H(+). The catalysed reaction is a 2-methoxy-6-(all-trans-polyprenyl)benzene-1,4-diol + S-adenosyl-L-methionine = a 5-methoxy-2-methyl-3-(all-trans-polyprenyl)benzene-1,4-diol + S-adenosyl-L-homocysteine + H(+). It participates in quinol/quinone metabolism; menaquinone biosynthesis; menaquinol from 1,4-dihydroxy-2-naphthoate: step 2/2. The protein operates within cofactor biosynthesis; ubiquinone biosynthesis. Its function is as follows. Methyltransferase required for the conversion of demethylmenaquinol (DMKH2) to menaquinol (MKH2) and the conversion of 2-polyprenyl-6-methoxy-1,4-benzoquinol (DDMQH2) to 2-polyprenyl-3-methyl-6-methoxy-1,4-benzoquinol (DMQH2). This chain is Ubiquinone/menaquinone biosynthesis C-methyltransferase UbiE, found in Yersinia pestis bv. Antiqua (strain Antiqua).